A 205-amino-acid polypeptide reads, in one-letter code: Large ribosomal subunit protein uL4 (205 aa).

The protein belongs to the universal ribosomal protein uL4 family. Part of the 50S ribosomal subunit.

One of the primary rRNA binding proteins, this protein initially binds near the 5'-end of the 23S rRNA. It is important during the early stages of 50S assembly. It makes multiple contacts with different domains of the 23S rRNA in the assembled 50S subunit and ribosome. In terms of biological role, forms part of the polypeptide exit tunnel. This is Large ribosomal subunit protein uL4 from Thermus thermophilus (strain ATCC BAA-163 / DSM 7039 / HB27).